Consider the following 130-residue polypeptide: Cystatin domain-containing protein 1 (130 aa).

A signal peptide spans 1-23 (MSWKVPMLVGLVVLGTHIWTINK). Residues 37–116 (ASVEFAVAQF…CVFQVDARPW (80 aa)) enclose the Cystatin domain. Disulfide bonds link Cys-84/Cys-94 and Cys-107/Cys-127.

This sequence belongs to the cystatin family.

The protein resides in the secreted. May play a specialized role in spermatogenesis. The sequence is that of Cystatin domain-containing protein 1 from Rattus norvegicus (Rat).